A 953-amino-acid chain; its full sequence is Translation initiation factor IF-2 (953 aa).

A disordered region spans residues 55-340; sequence GVTTEAPAAS…KSKRQKRNEY (286 aa). The segment covering 81-93 has biased composition (low complexity); sequence KPAATPQQAAKPA. Over residues 110–119 the composition is skewed to pro residues; the sequence is PKPAAKPVPK. 2 stretches are compositionally biased toward low complexity: residues 123-133 and 143-160; these read SAAKAESSAPK and KPAA…MPRP. Positions 202 to 219 are enriched in gly residues; it reads PGGGPRPGGNRPQGGQGG. Over residues 233–248 the composition is skewed to low complexity; it reads QPRPQGGSRSQQSGGQ. The span at 280 to 323 shows a compositional bias: gly residues; the sequence is NGRGGAGGQGGRPGFGGGRPGGGGSAGGRGGRRGGTAGAFGRPG. The segment covering 327 to 336 has biased composition (basic residues); it reads RKGRKSKRQK. A tr-type G domain is found at 449–621; that stretch reads KRPPVVTVMG…VLLTADASLD (173 aa). Residues 458-465 are G1; sequence GHVDHGKT. 458 to 465 contributes to the GTP binding site; it reads GHVDHGKT. Residues 483–487 form a G2 region; it reads GITQG. The tract at residues 508–511 is G3; it reads DTPG. GTP is bound by residues 508-512 and 562-565; these read DTPGH and NKID. Positions 562–565 are G4; sequence NKID. The G5 stretch occupies residues 598 to 600; that stretch reads SAK.

The protein belongs to the TRAFAC class translation factor GTPase superfamily. Classic translation factor GTPase family. IF-2 subfamily.

The protein resides in the cytoplasm. Functionally, one of the essential components for the initiation of protein synthesis. Protects formylmethionyl-tRNA from spontaneous hydrolysis and promotes its binding to the 30S ribosomal subunits. Also involved in the hydrolysis of GTP during the formation of the 70S ribosomal complex. This is Translation initiation factor IF-2 from Corynebacterium diphtheriae (strain ATCC 700971 / NCTC 13129 / Biotype gravis).